A 68-amino-acid polypeptide reads, in one-letter code: MKFTATFLMIAIFVLMVEPGECGWGSFFKKAAHVGKHVGKAALTHYLGDKQELNKRAVDEDPNVIVFE.

Positions methionine 1–cysteine 22 are cleaved as a signal peptide. A propeptide spanning residues glycine 48–glutamate 68 is cleaved from the precursor.

Belongs to the pleurocidin family. Goblet cells.

Its subcellular location is the secreted. Its function is as follows. Antimicrobial peptide with potent activity against Gram-positive and Gram-negative bacteria. Activity against E.coli and B.subtilis. Weaker activity against L.mucor, s.marcescens and P.aeruginosa. May play a role in innate host defense. The chain is Pleurocidin (ple2) from Pseudopleuronectes americanus (Winter flounder).